The chain runs to 145 residues: Large ribosomal subunit protein uL13 (145 aa).

The protein belongs to the universal ribosomal protein uL13 family. In terms of assembly, part of the 50S ribosomal subunit.

In terms of biological role, this protein is one of the early assembly proteins of the 50S ribosomal subunit, although it is not seen to bind rRNA by itself. It is important during the early stages of 50S assembly. The polypeptide is Large ribosomal subunit protein uL13 (Listeria innocua serovar 6a (strain ATCC BAA-680 / CLIP 11262)).